Consider the following 288-residue polypeptide: Pantothenate synthetase (288 aa).

Residue 30-37 participates in ATP binding; that stretch reads MGNLHNGH. His37 serves as the catalytic Proton donor. Position 61 (Gln61) interacts with (R)-pantoate. Gln61 is a beta-alanine binding site. An ATP-binding site is contributed by 149-152; the sequence is GQKD. Gln155 contributes to the (R)-pantoate binding site. ATP-binding positions include Val178 and 186-189; that span reads LSSR.

Belongs to the pantothenate synthetase family. In terms of assembly, homodimer.

It localises to the cytoplasm. The enzyme catalyses (R)-pantoate + beta-alanine + ATP = (R)-pantothenate + AMP + diphosphate + H(+). The protein operates within cofactor biosynthesis; (R)-pantothenate biosynthesis; (R)-pantothenate from (R)-pantoate and beta-alanine: step 1/1. Functionally, catalyzes the condensation of pantoate with beta-alanine in an ATP-dependent reaction via a pantoyl-adenylate intermediate. The chain is Pantothenate synthetase from Tolumonas auensis (strain DSM 9187 / NBRC 110442 / TA 4).